A 458-amino-acid chain; its full sequence is UDP-N-acetylmuramate--L-alanine ligase (458 aa).

ATP is bound at residue 118 to 124 (GTHGKTT).

This sequence belongs to the MurCDEF family.

It localises to the cytoplasm. It catalyses the reaction UDP-N-acetyl-alpha-D-muramate + L-alanine + ATP = UDP-N-acetyl-alpha-D-muramoyl-L-alanine + ADP + phosphate + H(+). It participates in cell wall biogenesis; peptidoglycan biosynthesis. Cell wall formation. This Clostridium botulinum (strain Kyoto / Type A2) protein is UDP-N-acetylmuramate--L-alanine ligase.